We begin with the raw amino-acid sequence, 659 residues long: DNA ligase (659 aa).

NAD(+) contacts are provided by residues 32-36 (DQQYD), 81-82 (SL), and glutamate 110. Residue lysine 112 is the N6-AMP-lysine intermediate of the active site. Positions 133, 167, 282, and 306 each coordinate NAD(+). Residues cysteine 399, cysteine 402, cysteine 415, and cysteine 420 each contribute to the Zn(2+) site. The BRCT domain maps to 582-659 (IKNNIFKNKK…QEHEFEELIK (78 aa)).

It belongs to the NAD-dependent DNA ligase family. LigA subfamily. It depends on Mg(2+) as a cofactor. Mn(2+) is required as a cofactor.

It carries out the reaction NAD(+) + (deoxyribonucleotide)n-3'-hydroxyl + 5'-phospho-(deoxyribonucleotide)m = (deoxyribonucleotide)n+m + AMP + beta-nicotinamide D-nucleotide.. Its function is as follows. DNA ligase that catalyzes the formation of phosphodiester linkages between 5'-phosphoryl and 3'-hydroxyl groups in double-stranded DNA using NAD as a coenzyme and as the energy source for the reaction. It is essential for DNA replication and repair of damaged DNA. This is DNA ligase from Phytoplasma mali (strain AT).